A 336-amino-acid polypeptide reads, in one-letter code: Dihydroorotate dehydrogenase (quinone) (336 aa).

FMN is bound by residues 62-66 and T86; that span reads AGLDK. K66 is a substrate binding site. Residue 111-115 participates in substrate binding; it reads NRMGF. N139 and N172 together coordinate FMN. N172 lines the substrate pocket. The active-site Nucleophile is S175. N177 contributes to the substrate binding site. Residues K217 and T245 each contribute to the FMN site. 246-247 serves as a coordination point for substrate; it reads NT. FMN contacts are provided by residues G268, G297, and 318-319; that span reads YS.

Belongs to the dihydroorotate dehydrogenase family. Type 2 subfamily. In terms of assembly, monomer. FMN serves as cofactor.

The protein resides in the cell membrane. It carries out the reaction (S)-dihydroorotate + a quinone = orotate + a quinol. It participates in pyrimidine metabolism; UMP biosynthesis via de novo pathway; orotate from (S)-dihydroorotate (quinone route): step 1/1. In terms of biological role, catalyzes the conversion of dihydroorotate to orotate with quinone as electron acceptor. This chain is Dihydroorotate dehydrogenase (quinone), found in Yersinia pseudotuberculosis serotype O:1b (strain IP 31758).